A 447-amino-acid polypeptide reads, in one-letter code: Clusterin (447 aa).

A signal peptide spans 1 to 22 (MKTLLLCVGLLLSWERGQVLGD). The Nuclear localization signal signature appears at 77-80 (KKNK). Asn-85 and Asn-102 each carry an N-linked (GlcNAc...) asparagine glycan. 5 cysteine pairs are disulfide-bonded: Cys-101–Cys-311, Cys-112–Cys-303, Cys-115–Cys-300, Cys-120–Cys-293, and Cys-128–Cys-283. Residue Ser-132 is modified to Phosphoserine. Asn-144, Asn-289, Asn-326, Asn-352, and Asn-372 each carry an N-linked (GlcNAc...) asparagine glycan. Residue Ser-394 is modified to Phosphoserine. Positions 441 to 445 (RKKKR) match the Nuclear localization signal motif.

It belongs to the clusterin family. As to quaternary structure, antiparallel disulfide-linked heterodimer of an alpha chain and a beta chain. Self-associates and forms higher oligomers. Interacts with a broad range of misfolded proteins, including APP, APOC2 and LYZ. Slightly acidic pH promotes interaction with misfolded proteins. Forms high-molecular weight oligomers upon interaction with misfolded proteins. Interacts with APOA1, LRP2, CLUAP1 and PON1. Interacts with the complement membrane attack complex. Interacts (via alpha chain) with XRCC6. Interacts with SYVN1, COMMD1, BTRC, CUL1 and with ubiquitin and SCF (SKP1-CUL1-F-box protein) E3 ubiquitin-protein ligase complexes. Interacts (via alpha chain) with BAX in stressed cells, where BAX undergoes a conformation change leading to association with the mitochondrial membrane. Does not interact with BAX in unstressed cells. Found in a complex with LTF, CLU, EPPIN and SEMG1. Interacts (immaturely glycosylated pre-secreted form) with HSPA5; this interaction promotes CLU stability and facilitates stress-induced CLU retrotranslocation from the secretory pathway to the mitochondria, thereby reducing stress-induced apoptosis by stabilizing mitochondrial membrane integrity. Interacts with BCL2L1; this interaction releases and activates BAX and promotes cell death. Interacts with TGFBR2 and ACVR1. Interacts (secreted form) with STMN3; this interaction may act as an important modulator during neuronal differentiation. Interacts with VLDLR and LRP8. Proteolytically cleaved on its way through the secretory system, probably within the Golgi lumen. Proteolytic cleavage is not necessary for its chaperone activity. All non-secreted forms are not proteolytically cleaved. Chaperone activity of uncleaved forms is dependent on a non-reducing environment. In terms of processing, polyubiquitinated, leading to proteasomal degradation. Under cellular stress, the intracellular level of cleaved form is reduced due to proteasomal degradation. Post-translationally, heavily N-glycosylated. About 30% of the protein mass is comprised of complex N-linked carbohydrate. Endoplasmic reticulum (ER) stress induces changes in glycosylation status and increases level of hypoglycosylated forms. Core carbohydrates are essential for chaperone activity. Non-secreted forms are hypoglycosylated or unglycosylated.

It localises to the secreted. Its subcellular location is the nucleus. The protein localises to the cytoplasm. It is found in the mitochondrion membrane. The protein resides in the cytosol. It localises to the microsome. Its subcellular location is the endoplasmic reticulum. The protein localises to the mitochondrion. It is found in the perinuclear region. The protein resides in the cytoplasmic vesicle. It localises to the secretory vesicle. Its subcellular location is the chromaffin granule. Functionally, functions as extracellular chaperone that prevents aggregation of non native proteins. Prevents stress-induced aggregation of blood plasma proteins. Inhibits formation of amyloid fibrils by APP, APOC2, B2M, CALCA, CSN3, SNCA and aggregation-prone LYZ variants (in vitro). Does not require ATP. Maintains partially unfolded proteins in a state appropriate for subsequent refolding by other chaperones, such as HSPA8/HSC70. Does not refold proteins by itself. Binding to cell surface receptors triggers internalization of the chaperone-client complex and subsequent lysosomal or proteasomal degradation. When secreted, protects cells against apoptosis and against cytolysis by complement: inhibits assembly of the complement membrane attack complex (MAC) by preventing polymerization of C9 pore component of the MAC complex. Intracellular forms interact with ubiquitin and SCF (SKP1-CUL1-F-box protein) E3 ubiquitin-protein ligase complexes and promote the ubiquitination and subsequent proteasomal degradation of target proteins. Promotes proteasomal degradation of COMMD1 and IKBKB. Modulates NF-kappa-B transcriptional activity. Following stress, promotes apoptosis. Inhibits apoptosis when associated with the mitochondrial membrane by interference with BAX-dependent release of cytochrome c into the cytoplasm. Plays a role in the regulation of cell proliferation. An intracellular form suppresses stress-induced apoptosis by stabilizing mitochondrial membrane integrity through interaction with HSPA5. Secreted form does not affect caspase or BAX-mediated intrinsic apoptosis and TNF-induced NF-kappa-B-activity. Secreted form act as an important modulator during neuronal differentiation through interaction with STMN3. Plays a role in the clearance of immune complexes that arise during cell injury. This chain is Clusterin (CLU), found in Oryctolagus cuniculus (Rabbit).